We begin with the raw amino-acid sequence, 663 residues long: Bifunctional polymyxin resistance protein ArnA (663 aa).

A formyltransferase ArnAFT region spans residues 1–304 (MKAVVFAYHD…ELGLVAGMRL (304 aa)). Histidine 104 functions as the Proton donor; for formyltransferase activity in the catalytic mechanism. Residues arginine 114 and 136 to 140 (TMRPD) each bind (6R)-10-formyltetrahydrofolate. Positions 316–663 (RLTRVLILGV…GAVSTGVEHD (348 aa)) are dehydrogenase ArnADH. Residues aspartate 349 and 370–371 (DI) each bind NAD(+). Residues alanine 395, tyrosine 400, and 434-435 (TS) contribute to the UDP-alpha-D-glucuronate site. Glutamate 436 acts as the Proton acceptor; for decarboxylase activity in catalysis. UDP-alpha-D-glucuronate-binding positions include arginine 462, asparagine 494, 528–537 (QLVDGGAQKR), and tyrosine 615. Arginine 621 acts as the Proton donor; for decarboxylase activity in catalysis.

The protein in the N-terminal section; belongs to the Fmt family. UDP-L-Ara4N formyltransferase subfamily. It in the C-terminal section; belongs to the NAD(P)-dependent epimerase/dehydratase family. UDP-glucuronic acid decarboxylase subfamily. As to quaternary structure, homohexamer, formed by a dimer of trimers.

It catalyses the reaction UDP-alpha-D-glucuronate + NAD(+) = UDP-beta-L-threo-pentopyranos-4-ulose + CO2 + NADH. The catalysed reaction is UDP-4-amino-4-deoxy-beta-L-arabinose + (6R)-10-formyltetrahydrofolate = UDP-4-deoxy-4-formamido-beta-L-arabinose + (6S)-5,6,7,8-tetrahydrofolate + H(+). Its pathway is nucleotide-sugar biosynthesis; UDP-4-deoxy-4-formamido-beta-L-arabinose biosynthesis; UDP-4-deoxy-4-formamido-beta-L-arabinose from UDP-alpha-D-glucuronate: step 1/3. It participates in nucleotide-sugar biosynthesis; UDP-4-deoxy-4-formamido-beta-L-arabinose biosynthesis; UDP-4-deoxy-4-formamido-beta-L-arabinose from UDP-alpha-D-glucuronate: step 3/3. It functions in the pathway bacterial outer membrane biogenesis; lipopolysaccharide biosynthesis. Its function is as follows. Bifunctional enzyme that catalyzes the oxidative decarboxylation of UDP-glucuronic acid (UDP-GlcUA) to UDP-4-keto-arabinose (UDP-Ara4O) and the addition of a formyl group to UDP-4-amino-4-deoxy-L-arabinose (UDP-L-Ara4N) to form UDP-L-4-formamido-arabinose (UDP-L-Ara4FN). The modified arabinose is attached to lipid A and is required for resistance to polymyxin and cationic antimicrobial peptides. This Aeromonas salmonicida (strain A449) protein is Bifunctional polymyxin resistance protein ArnA.